The following is a 352-amino-acid chain: Mitochondrial ubiquitin ligase activator of NFKB 1 (352 aa).

Residues 1–8 (MENGGRPS) are Cytoplasmic-facing. A helical transmembrane segment spans residues 9–29 (LCQFILLGTTSVVTAALYSVY). The Mitochondrial intermembrane portion of the chain corresponds to 30–238 (RQKAWVSQEL…LLQRQESSVR (209 aa)). Lys-52 participates in a covalent cross-link: Glycyl lysine isopeptide (Lys-Gly) (interchain with G-Cter in ubiquitin). The helical transmembrane segment at 239-259 (LWKVLALVFGFATCATLFFIL) threads the bilayer. Residues 260 to 352 (RKQYLQRQER…ITRVIPLYNS (93 aa)) are Cytoplasmic-facing. Residues Lys-273 and Lys-299 each participate in a glycyl lysine isopeptide (Lys-Gly) (interchain with G-Cter in ubiquitin) cross-link. The segment at 302–340 (CVVCLSSFKSCVFLECGHVCSCTECYRALPEPKKCPICR) adopts an RING-type zinc-finger fold.

As to quaternary structure, homooligomer. Interacts with MAP3K7/TAK1. Interacts with UBC9. Interacts with and sumoylates DNM1L. Interacts with MAVS. Interacts with TP53 (via N-terminus); the interaction leads to ubiquitination and proteasomal degradation of TP53. Post-translationally, ubiquitinated by PRKN during mitophagy, leading to its degradation and enhancement of mitophagy. Deubiquitinated by USP30.

It is found in the mitochondrion outer membrane. Its subcellular location is the peroxisome. It carries out the reaction S-ubiquitinyl-[E2 ubiquitin-conjugating enzyme]-L-cysteine + [acceptor protein]-L-lysine = [E2 ubiquitin-conjugating enzyme]-L-cysteine + N(6)-ubiquitinyl-[acceptor protein]-L-lysine.. It functions in the pathway protein modification; protein ubiquitination. Its pathway is protein modification; protein sumoylation. Its function is as follows. Exhibits weak E3 ubiquitin-protein ligase activity. E3 ubiquitin ligases accept ubiquitin from an E2 ubiquitin-conjugating enzyme in the form of a thioester and then directly transfer the ubiquitin to targeted substrates. Can ubiquitinate AKT1 preferentially at 'Lys-284' involving 'Lys-48'-linked polyubiquitination and seems to be involved in regulation of Akt signaling by targeting phosphorylated Akt to proteasomal degradation. Mediates polyubiquitination of cytoplasmic TP53 at 'Lys-24' which targets TP53 for proteasomal degradation, thus reducing TP53 levels in the cytoplasm and mitochondrion. Proposed to preferentially act as a SUMO E3 ligase at physiological concentrations. Plays a role in the control of mitochondrial morphology by promoting mitochondrial fragmentation, and influences mitochondrial localization. Likely to promote mitochondrial fission through negatively regulating the mitochondrial fusion proteins MFN1 and MFN2, acting in a pathway that is parallel to the PRKN/PINK1 regulatory pathway. May also be involved in the sumoylation of the membrane fission protein DNM1L. Inhibits cell growth. When overexpressed, activates JNK through MAP3K7/TAK1 and induces caspase-dependent apoptosis. Involved in the modulation of innate immune defense against viruses by inhibiting RIGI-dependent antiviral response. Can mediate RIGI sumoylation and disrupt its polyubiquitination. The chain is Mitochondrial ubiquitin ligase activator of NFKB 1 (MUL1) from Macaca fascicularis (Crab-eating macaque).